A 482-amino-acid polypeptide reads, in one-letter code: MPSELPNFIPAVPEMFVLFMALVILLAGVFIKKRHQIPYYLTQITLILVAGLTWYIFTYSDFAETSFTFHHMFVLDRFSVYLKLFIYLSVFFAFIYAREYNDERKIPHTEFYVLGLLSMLGMVALVSSSNLLTVFLGLELLSLPTYAMVALYRNKTRSVEAGMKYFVIGAIASGMLLYGMSMIFGATQSLDLTEIAKAVSATPLHQNLILVFGLVFIVAGVAFKLGTAPFHMWVPDVYEGAPSSVTLFISTAPKIAAYAMIIRLLILGMPALHVQWHQMLIVVAILSMGIGNFAAIVQSNIKRMLAYSSIAHMGYMLLGVLCGTRNGYAAAMFYTITYSLMSLGAFGMVVLMSRGGFEAENINDFAGLNSRNPWLAFMMMLILFSLAGVPPLVGFIAKVGVLDALIQVHLVWLAVLAVLFAIVGAYYYIRVVKVMYFESAPPQLKPIRCSLEMKIAISLNGLAVLFIGIFPGWLYALSHLAF.

14 consecutive transmembrane segments (helical) span residues 11 to 31, 37 to 57, 77 to 97, 106 to 126, 131 to 151, 166 to 186, 208 to 228, 255 to 275, 279 to 299, 304 to 324, 332 to 352, 376 to 396, 404 to 424, and 462 to 482; these read AVPE…GVFI, IPYY…WYIF, RFSV…FIYA, IPHT…VALV, LLTV…MVAL, FVIG…IFGA, LILV…LGTA, IAAY…LHVQ, MLIV…IVQS, MLAY…LCGT, MFYT…VVLM, AFMM…VGFI, ALIQ…AIVG, and LAVL…HLAF.

The protein belongs to the complex I subunit 2 family. NDH-1 is composed of 14 different subunits. Subunits NuoA, H, J, K, L, M, N constitute the membrane sector of the complex.

It localises to the cell inner membrane. The catalysed reaction is a quinone + NADH + 5 H(+)(in) = a quinol + NAD(+) + 4 H(+)(out). In terms of biological role, NDH-1 shuttles electrons from NADH, via FMN and iron-sulfur (Fe-S) centers, to quinones in the respiratory chain. The immediate electron acceptor for the enzyme in this species is believed to be ubiquinone. Couples the redox reaction to proton translocation (for every two electrons transferred, four hydrogen ions are translocated across the cytoplasmic membrane), and thus conserves the redox energy in a proton gradient. This chain is NADH-quinone oxidoreductase subunit N, found in Coxiella burnetii (strain RSA 493 / Nine Mile phase I).